The sequence spans 92 residues: Large ribosomal subunit protein eL43 (92 aa).

The C4-type zinc finger occupies 39-60; that stretch reads CSFCGKKTVRRGAAGIWSCHSC.

This sequence belongs to the eukaryotic ribosomal protein eL43 family.

In Candida glabrata (strain ATCC 2001 / BCRC 20586 / JCM 3761 / NBRC 0622 / NRRL Y-65 / CBS 138) (Yeast), this protein is Large ribosomal subunit protein eL43 (RPL43).